Here is a 135-residue protein sequence, read N- to C-terminus: MSLTLRVLAPDQSVFDGSADEVILPSTTGQVGILPGHVSLLAALDVGVLRVRTNSNWQSIALMGGFAEVESDDVTVLVNSAELGVNIDSTSAESDLSAARTAVTKLEGQPSTPEKVKAQQLFQRARARAQASKST.

Residues 101-122 (TAVTKLEGQPSTPEKVKAQQLF) form a disordered region.

Belongs to the ATPase epsilon chain family. In terms of assembly, F-type ATPases have 2 components, CF(1) - the catalytic core - and CF(0) - the membrane proton channel. CF(1) has five subunits: alpha(3), beta(3), gamma(1), delta(1), epsilon(1). CF(0) has three main subunits: a, b and c.

The protein resides in the cellular thylakoid membrane. Produces ATP from ADP in the presence of a proton gradient across the membrane. The protein is ATP synthase epsilon chain of Synechococcus sp. (strain CC9311).